The sequence spans 245 residues: 3-deoxy-manno-octulosonate cytidylyltransferase (245 aa).

This sequence belongs to the KdsB family.

It localises to the cytoplasm. The enzyme catalyses 3-deoxy-alpha-D-manno-oct-2-ulosonate + CTP = CMP-3-deoxy-beta-D-manno-octulosonate + diphosphate. The protein operates within nucleotide-sugar biosynthesis; CMP-3-deoxy-D-manno-octulosonate biosynthesis; CMP-3-deoxy-D-manno-octulosonate from 3-deoxy-D-manno-octulosonate and CTP: step 1/1. It functions in the pathway bacterial outer membrane biogenesis; lipopolysaccharide biosynthesis. In terms of biological role, activates KDO (a required 8-carbon sugar) for incorporation into bacterial lipopolysaccharide in Gram-negative bacteria. The protein is 3-deoxy-manno-octulosonate cytidylyltransferase of Rhodopseudomonas palustris (strain BisB5).